The primary structure comprises 304 residues: Thyroxine 5-deiodinase (304 aa).

The interval methionine 1–glycine 22 is disordered. The Cytoplasmic segment spans residues methionine 1–serine 44. A helical; Signal-anchor for type II membrane protein transmembrane segment spans residues cysteine 45–isoleucine 67. At arginine 68–phenylalanine 304 the chain is on the extracellular side. Selenocysteine 170 is an active-site residue. A non-standard amino acid (selenocysteine) is located at residue selenocysteine 170.

The protein belongs to the iodothyronine deiodinase family. As to quaternary structure, monomer. Homodimer. May undergo minor heretodimerization with DIO1 and DIO2.

It is found in the cell membrane. The protein resides in the endosome membrane. It catalyses the reaction 3,3',5'-triiodo-L-thyronine + iodide + A + H(+) = L-thyroxine + AH2. It carries out the reaction 3,3'-diiodo-L-thyronine + iodide + A + H(+) = 3,3',5-triiodo-L-thyronine + AH2. The enzyme catalyses 3-iodo-L-thyronine + iodide + A + H(+) = 3,5-diiodo-L-thyronine + AH2. The catalysed reaction is L-thyronine + iodide + A + H(+) = 3-iodo-L-thyronine + AH2. It catalyses the reaction 3',5'-diiodo-L-thyronine + iodide + A + H(+) = 3,3',5'-triiodo-L-thyronine + AH2. It carries out the reaction 3'-iodo-L-thyronine + iodide + A + H(+) = 3,3'-diiodo-L-thyronine + AH2. The enzyme catalyses 3,3',5'-triiodothyronamine + iodide + A + H(+) = 3,3',5,5'-tetraiodothyronamine + AH2. The catalysed reaction is 3',5'-diiodothyronamine + iodide + A + H(+) = 3,3',5'-triiodothyronamine + AH2. It catalyses the reaction 3,3'-diiodothyronamine + iodide + A + H(+) = 3,3',5-triiodothyronamine + AH2. It carries out the reaction 3-iodothyronamine + iodide + A + H(+) = 3,5-diiodothyronamine + AH2. The enzyme catalyses 3'-iodothyronamine + iodide + A + H(+) = 3,3'-diiodothyronamine + AH2. The catalysed reaction is thyronamine + iodide + A + H(+) = 3-iodothyronamine + AH2. In terms of biological role, plays a crucial role in the metabolism of thyroid hormones (TH) and has specific roles in TH activation and inactivation by deiodination. Catalyzes the deiodination of L-thyroxine (T4) to 3,3',5'-triiodothyronine (rT3), 3,5,3'-triiodothyronine (T3) to 3,3'-diiodothyronine (3,3'-T2), 3,5-diiodothyronine (3,5-T2) to 3-monoiodothyronine (3-T1), rT3 to 3',5'-diiodothyronine (3',5'-T2) and 3,3'-T2 to 3'-monoiodothyronine (3'-T1) via inner-ring deiodination (IRD). Catalyzes the deiodination of 3-T1 to L-thyronine (T0) via outer-ring deiodination (ORD). Catalyzes the tyrosyl ring deiodinations of 3,3',5,5'-tetraiodothyronamine, 3,3',5'-triiodothyronamine, 3,5,3'-triiodothyronamine, 3,5-diiodothyronamine, 3,3'-diiodothyronamine and 3-iodothyronamine. In Mus musculus (Mouse), this protein is Thyroxine 5-deiodinase (Dio3).